The sequence spans 176 residues: ELVDVEGEDVVNGGTYYMLPGIEGDGGGMEGAKTGRETCPITVVQSRNDVSNGEPITIESPFRSYFIPKGSLVRIGFTSPPKCAPSPWWTLALDRPQGLSVKLGEYESTEFNYSFKFEDVSSKLHSYKLSYCVREEWYEDYICKNIGIYRDSKGYRRLVVNEENPLVVVLKKVESS.

Disulfide bonds link cysteine 39–cysteine 83 and cysteine 132–cysteine 143.

The protein belongs to the protease inhibitor I3 (leguminous Kunitz-type inhibitor) family.

Functionally, inhibits trypsin stoichiometrically. This Erythrina variegata (Indian coral tree) protein is Trypsin inhibitor 1B.